A 1461-amino-acid polypeptide reads, in one-letter code: DNA topoisomerase 2 (1461 aa).

The segment covering 1-17 (MSESESDYFTDGSEDDF) has biased composition (acidic residues). The tract at residues 1–61 (MSESESDYFT…TPKPTNASET (61 aa)) is disordered. Residues 41–52 (TNSTVSSSRSST) show a composition bias toward low complexity. ATP is bound by residues asparagine 120, asparagine 149, 177–179 (SSN), and 190–197 (GRNGFGAK). Residues 382 to 389 (SKKEKGKK) form an interaction with DNA region. 418–420 (QTK) provides a ligand contact to ATP. The Toprim domain occupies 498 to 614 (CTLILTEGLS…GLLDIPGFLL (117 aa)). Mg(2+)-binding residues include glutamate 504, aspartate 583, and aspartate 585. The Topo IIA-type catalytic domain occupies 752-1226 (IPSVLDGFKP…SAKDLWNQDL (475 aa)). Catalysis depends on tyrosine 842, which acts as the O-(5'-phospho-DNA)-tyrosine intermediate. The interaction with DNA stretch occupies residues 1024 to 1033 (KLVSSLSLAN). 2 disordered regions span residues 1122–1155 (DGKP…DVGN) and 1244–1461 (RESL…IVDE). Acidic residues predominate over residues 1133–1153 (LTGDDADEEEETQEQEGDEDV). The segment covering 1251 to 1261 (GKKKSTKRRAK) has biased composition (basic residues). 2 stretches are compositionally biased toward basic and acidic residues: residues 1274-1283 (VKVEPKEKKS) and 1406-1417 (DKPEPKERRTRE). Residues 1434–1461 (DSDDEDEDEEDDIVMSDGDDDDDFIVDE) show a composition bias toward acidic residues.

It belongs to the type II topoisomerase family. In terms of assembly, homodimer. Mg(2+) serves as cofactor. Requires Mn(2+) as cofactor. It depends on Ca(2+) as a cofactor.

It localises to the nucleus. It catalyses the reaction ATP-dependent breakage, passage and rejoining of double-stranded DNA.. Functionally, control of topological states of DNA by transient breakage and subsequent rejoining of DNA strands. Topoisomerase II makes double-strand breaks. The chain is DNA topoisomerase 2 (TOP2) from Candida albicans (Yeast).